The following is a 2946-amino-acid chain: Neurobeachin (2946 aa).

The tract at residues 971–995 (ENIKKGKKGNVSTISGLSSQTTGAK) is disordered. The span at 980–993 (NVSTISGLSSQTTG) shows a compositional bias: polar residues. A phosphoserine mark is found at serine 1011 and serine 1014. The WD 1 repeat unit spans residues 1326–1368 (TTMFRIPEFKWSPMHQRLLTDLLFALETDVHVWRSHSTKSVMD). Disordered regions lie at residues 1490–1531 (QRDR…LSPI), 1651–1675 (TIKEKETPTPGEDIQVESSIPHTDS), 1711–1731 (VKKSQESLTENPSETLKPATS), and 1841–1860 (GAVDSGSSSSSSSSSFVNGA). Residues 1497–1517 (SSHGSSKPQEVPQSVTATAAS) are compositionally biased toward polar residues. A Phosphoserine modification is found at serine 1529. Residues serine 1714 and serine 1717 each carry the phosphoserine modification. The segment covering 1716–1731 (ESLTENPSETLKPATS) has biased composition (polar residues). Over residues 1845 to 1855 (SGSSSSSSSSS) the composition is skewed to low complexity. Phosphoserine is present on serine 2138. Residues 2147 to 2255 (NLAGPVVLST…TVKKVVYSLP (109 aa)) enclose the BEACH-type PH domain. The region spanning 2274-2563 (ATPRQLYKSS…QLLIEPHPPR (290 aa)) is the BEACH domain. Serine 2575 bears the Phosphoserine mark. 4 WD repeats span residues 2718–2761 (GHWD…HIIG), 2778–2818 (GHDH…RALE), 2860–2899 (EINDSTRAILLSSDGQNLVTGGDNGVVEVWQACDFKQLYI), and 2902–2941 (GCDAGIRAMDLSHDQRTLITGMASGSIVAFNIDFNRWHYE).

The protein belongs to the WD repeat neurobeachin family. In terms of assembly, interacts with RII subunit of PKA. In terms of tissue distribution, predominant in many brain structures. Also expressed at medium levels in spleen, thymus, prostate, testis and ovary. Low level expression is seen in heart, kidney, pancreas, skeletal muscle and intestine.

The protein localises to the cytoplasm. The protein resides in the membrane. In terms of biological role, binds to type II regulatory subunits of protein kinase A and anchors/targets them to the membrane. May anchor the kinase to cytoskeletal and/or organelle-associated proteins. The chain is Neurobeachin from Homo sapiens (Human).